We begin with the raw amino-acid sequence, 260 residues long: HTH-type transcriptional repressor NanR (260 aa).

The HTH gntR-type domain maps to 27–95 (KKLSEMVEEE…NGERARISRP (69 aa)). Positions 55 to 74 (ERELMAFFNVGRPSVREALA) form a DNA-binding region, H-T-H motif.

This sequence belongs to the NanR family.

Transcriptional repressor that controls expression of the genes required for the catabolism of sialic acids. This chain is HTH-type transcriptional repressor NanR, found in Edwardsiella tarda (strain FL6-60).